The chain runs to 350 residues: S-adenosylmethionine:tRNA ribosyltransferase-isomerase (350 aa).

It belongs to the QueA family. In terms of assembly, monomer.

The protein localises to the cytoplasm. It carries out the reaction 7-aminomethyl-7-carbaguanosine(34) in tRNA + S-adenosyl-L-methionine = epoxyqueuosine(34) in tRNA + adenine + L-methionine + 2 H(+). Its pathway is tRNA modification; tRNA-queuosine biosynthesis. In terms of biological role, transfers and isomerizes the ribose moiety from AdoMet to the 7-aminomethyl group of 7-deazaguanine (preQ1-tRNA) to give epoxyqueuosine (oQ-tRNA). This chain is S-adenosylmethionine:tRNA ribosyltransferase-isomerase, found in Parvibaculum lavamentivorans (strain DS-1 / DSM 13023 / NCIMB 13966).